A 409-amino-acid chain; its full sequence is Nitrogen permease regulator 2 homolog (409 aa).

This sequence belongs to the NPR2 family.

It is found in the cytoplasm. The protein localises to the nucleus. Functionally, mediates inactivation of the TORC1 complex in response to amino acid starvation. Post-transcriptional regulator of nitrogen permeases. This Schizosaccharomyces pombe (strain 972 / ATCC 24843) (Fission yeast) protein is Nitrogen permease regulator 2 homolog.